The sequence spans 146 residues: 3-dehydroquinate dehydratase (146 aa).

The active-site Proton acceptor is Tyr23. Residues Asn74, His80, and Asp87 each coordinate substrate. His100 functions as the Proton donor in the catalytic mechanism. Substrate contacts are provided by residues 101–102 (IS) and Arg111.

The protein belongs to the type-II 3-dehydroquinase family. As to quaternary structure, homododecamer.

It catalyses the reaction 3-dehydroquinate = 3-dehydroshikimate + H2O. Its pathway is metabolic intermediate biosynthesis; chorismate biosynthesis; chorismate from D-erythrose 4-phosphate and phosphoenolpyruvate: step 3/7. In terms of biological role, catalyzes a trans-dehydration via an enolate intermediate. This is 3-dehydroquinate dehydratase from Bacillus cereus (strain G9842).